The following is a 770-amino-acid chain: Potassium transporter 25 (770 aa).

Topologically, residues 1–23 (MDLEAAHGAAAAPGKRRRRARES) are cytoplasmic. Residues 24–44 (WGASLLLAYQSLGVVYGDVAT) form a helical membrane-spanning segment. Residues 45–70 (SPLYVYKSAFAGDDIQHSAGNEEIYG) are Extracellular-facing. Residues 71-91 (VLSFVFWTLTLISLVKYVLIV) traverse the membrane as a helical segment. Residues 92 to 152 (LRADDGGEGG…MLERYRVLQR (61 aa)) lie on the Cytoplasmic side of the membrane. A helical membrane pass occupies residues 153-173 (LLLLFALLGTCMVIGDGVLTP). Over 174-194 (AVSVYSAVSGLELSMEHEHHK) the chain is Extracellular. A helical transmembrane segment spans residues 195–215 (YVQLPVTCAILIGLFALQHYG). Residues 216–218 (THR) lie on the Cytoplasmic side of the membrane. A helical transmembrane segment spans residues 219-239 (VGFIFAPIVCVWLLCISAIGV). Topologically, residues 240-267 (YNIVHWNHHVYRALSPYYMYQFLKKTQT) are extracellular. The helical transmembrane segment at 268–288 (GGWMSLGGILLCVTGSEAMYA) threads the bilayer. Topologically, residues 289–299 (DLGHFSQSSIK) are cytoplasmic. Residues 300 to 320 (IAFMSVVYPALVLAYMGQAAY) traverse the membrane as a helical segment. Over 321–346 (ISQHHSFENAYHIGFYVSVPEKLRWP) the chain is Extracellular. A helical transmembrane segment spans residues 347–367 (VLVIAILAAVVGSQAVITGTF). Residues 368–394 (SIIKQCSSLSCFPGVKIVHTSSTVHGQ) are Cytoplasmic-facing. A helical transmembrane segment spans residues 395–415 (IYIPEINWILMILCLAVTLGF). The Extracellular portion of the chain corresponds to 416–425 (RNTKHLANAQ). Residues 426–446 (GLAVITVMLVTTCLMSLVIVL) traverse the membrane as a helical segment. The Cytoplasmic segment spans residues 447-451 (CWNKS). The chain crosses the membrane as a helical span at residues 452–472 (IFLALGFLIFFGTIEVLYFSA). The Extracellular portion of the chain corresponds to 473-479 (SLVKFHE). A helical membrane pass occupies residues 480–500 (GAWVPITLSFIFMIVMCVWHY). The Cytoplasmic portion of the chain corresponds to 501–770 (GTIKKYEFDF…TLEVGMVYQV (270 aa)).

This sequence belongs to the HAK/KUP transporter (TC 2.A.72.3) family.

It is found in the membrane. In terms of biological role, high-affinity potassium transporter. The chain is Potassium transporter 25 (HAK25) from Oryza sativa subsp. japonica (Rice).